The chain runs to 115 residues: Pro-FMRFamide-related neuropeptide FF (115 aa).

The signal sequence occupies residues 1-22; the sequence is MDARQAAALLLVLLLVTDWSHA. Disordered regions lie at residues 20-51 and 78-102; these read SHAE…AQTP and FGRN…LSSP. A propeptide spanning residues 23 to 66 is cleaved from the precursor; that stretch reads EGPGGRDGGDQIFMEEDSGAHPAQDAQTPRSLLRSLLQAMQRPG. Residue F78 is modified to Phenylalanine amide. Residues 81–94 constitute a propeptide that is removed on maturation; it reads NTRGSWSNKRLSPR. F112 carries the post-translational modification Phenylalanine amide.

It belongs to the FARP (FMRFamide related peptide) family.

The protein resides in the secreted. Functionally, morphine modulating peptides. Have wide-ranging physiologic effects, including the modulation of morphine-induced analgesia, elevation of arterial blood pressure, and increased somatostatin secretion from the pancreas. The neuropeptide FF potentiates and sensitizes ASIC3 cation channel. In Bos taurus (Bovine), this protein is Pro-FMRFamide-related neuropeptide FF (NPFF).